The chain runs to 147 residues: Biogenesis of lysosome-related organelles complex 1 subunit 1 (147 aa).

Disordered regions lie at residues 1–25 (MLTS…VRRK) and 125–147 (SSGA…PSAT).

It belongs to the BLOC1S1 family. In terms of assembly, component of the biogenesis of lysosome-related organelles complex-1 (BLOC-1) composed of Blos1, Blos2, Blos3, Blos4, Dysb, Muted, Pldn and Snapin. Interacts with Pldn.

In terms of biological role, component of the biogenesis of lysosome-related organelles complex-1 (BLOC-1) involved in pigment granule biogenesis and membrane trafficking in synapses. In response to high synaptic activity at neuromuscular junctions, stabilizes Pldn protein levels and, together with Pldn, plays a role in promoting efficient synaptic vesicle recycling and re-formation through early endosomes. This Drosophila melanogaster (Fruit fly) protein is Biogenesis of lysosome-related organelles complex 1 subunit 1.